The sequence spans 190 residues: Nuclear transcription factor Y subunit B-2 (190 aa).

Positions 1-30 (MGDSDRDSGGGQNGNNQNGQSSLSPREQDR) are disordered. The DNA-binding element occupies 32–38 (LPIANVS). The tract at residues 59–70 (MQECVSEFISFV) is subunit association domain (SAD). The tract at residues 168 to 190 (HMYGATGGGSDSGGGAASGRTRT) is disordered. Over residues 172-184 (ATGGGSDSGGGAA) the composition is skewed to gly residues.

This sequence belongs to the NFYB/HAP3 subunit family. In terms of assembly, heterotrimeric transcription factor composed of three components, NF-YA, NF-YB and NF-YC. NF-YB and NF-YC must interact and dimerize for NF-YA association and DNA binding. Binds directly with DPB3-1. As to expression, ubiquitous. Predominantly expressed in flowers and siliques.

It localises to the nucleus. Functionally, component of the NF-Y/HAP transcription factor complex. The NF-Y complex stimulates the transcription of various genes by recognizing and binding to a CCAAT motif in promoters. The polypeptide is Nuclear transcription factor Y subunit B-2 (Arabidopsis thaliana (Mouse-ear cress)).